Here is a 408-residue protein sequence, read N- to C-terminus: Arginine biosynthesis bifunctional protein ArgJ (408 aa).

Residues T156, K182, T193, E279, N403, and T408 each coordinate substrate. Catalysis depends on T193, which acts as the Nucleophile.

The protein belongs to the ArgJ family. Heterotetramer of two alpha and two beta chains.

The protein resides in the cytoplasm. The catalysed reaction is N(2)-acetyl-L-ornithine + L-glutamate = N-acetyl-L-glutamate + L-ornithine. It catalyses the reaction L-glutamate + acetyl-CoA = N-acetyl-L-glutamate + CoA + H(+). The protein operates within amino-acid biosynthesis; L-arginine biosynthesis; L-ornithine and N-acetyl-L-glutamate from L-glutamate and N(2)-acetyl-L-ornithine (cyclic): step 1/1. It participates in amino-acid biosynthesis; L-arginine biosynthesis; N(2)-acetyl-L-ornithine from L-glutamate: step 1/4. Catalyzes two activities which are involved in the cyclic version of arginine biosynthesis: the synthesis of N-acetylglutamate from glutamate and acetyl-CoA as the acetyl donor, and of ornithine by transacetylation between N(2)-acetylornithine and glutamate. The polypeptide is Arginine biosynthesis bifunctional protein ArgJ (Methylococcus capsulatus (strain ATCC 33009 / NCIMB 11132 / Bath)).